The primary structure comprises 237 residues: Endoglucanase-1 (237 aa).

A signal peptide spans 1–16 (MKAFHLLAALAGAAVA). Glutamine 17 is modified (pyrrolidone carboxylic acid).

The protein belongs to the glycosyl hydrolase 12 (cellulase H) family.

Its subcellular location is the secreted. The enzyme catalyses Endohydrolysis of (1-&gt;4)-beta-D-glucosidic linkages in cellulose, lichenin and cereal beta-D-glucans.. The polypeptide is Endoglucanase-1 (Aspergillus aculeatus).